The primary structure comprises 209 residues: Uridine kinase (209 aa).

Residue 12 to 19 participates in ATP binding; the sequence is GGSGGGKT.

It belongs to the uridine kinase family.

The protein localises to the cytoplasm. It carries out the reaction uridine + ATP = UMP + ADP + H(+). The enzyme catalyses cytidine + ATP = CMP + ADP + H(+). It participates in pyrimidine metabolism; CTP biosynthesis via salvage pathway; CTP from cytidine: step 1/3. It functions in the pathway pyrimidine metabolism; UMP biosynthesis via salvage pathway; UMP from uridine: step 1/1. This Streptococcus agalactiae serotype V (strain ATCC BAA-611 / 2603 V/R) protein is Uridine kinase.